We begin with the raw amino-acid sequence, 292 residues long: Phosphoribulokinase, plasmid (292 aa).

Position 12-20 (12-20 (GSSGAGTTS)) interacts with ATP.

Belongs to the phosphoribulokinase family. In terms of assembly, homooctamer.

It carries out the reaction D-ribulose 5-phosphate + ATP = D-ribulose 1,5-bisphosphate + ADP + H(+). It participates in carbohydrate biosynthesis; Calvin cycle. This is Phosphoribulokinase, plasmid (cfxP) from Cupriavidus necator (strain ATCC 17699 / DSM 428 / KCTC 22496 / NCIMB 10442 / H16 / Stanier 337) (Ralstonia eutropha).